The primary structure comprises 286 residues: Apoptosis inhibitor 1 (286 aa).

2 BIR repeats span residues 29–96 (LIER…CAYA) and 131–199 (LQSR…CYFV). The Zn(2+) site is built by Cys169, Cys172, His189, and Cys196. Residues 238 to 274 (CKVCLERQRDAVLMPCRHFCVCVQCYFGLDQKCPTCR) form an RING-type zinc finger.

Acts by blocking cellular apoptosis early in infection. Later, stimulates caspase-3-like protease activity and induces apoptosis, probably to favor the release of occluded virions. The sequence is that of Apoptosis inhibitor 1 (IAP1) from Lepidoptera (butterflies and moths).